Reading from the N-terminus, the 181-residue chain is Ion-translocating oxidoreductase complex subunit B (181 aa).

Positions Met-1–Ala-26 are hydrophobic. One can recognise a 4Fe-4S domain in the interval Glu-32–Val-90. Residues Cys-49, Cys-52, Cys-57, Cys-73, Cys-110, Cys-113, Cys-116, Cys-120, Cys-140, Cys-143, Cys-146, and Cys-150 each contribute to the [4Fe-4S] cluster site. 2 consecutive 4Fe-4S ferredoxin-type domains span residues Lys-101–Lys-130 and Gln-131–Val-160.

Belongs to the 4Fe4S bacterial-type ferredoxin family. RnfB subfamily. As to quaternary structure, the complex is composed of six subunits: RnfA, RnfB, RnfC, RnfD, RnfE and RnfG. [4Fe-4S] cluster is required as a cofactor.

The protein localises to the cell inner membrane. In terms of biological role, part of a membrane-bound complex that couples electron transfer with translocation of ions across the membrane. This chain is Ion-translocating oxidoreductase complex subunit B, found in Magnetococcus marinus (strain ATCC BAA-1437 / JCM 17883 / MC-1).